A 148-amino-acid chain; its full sequence is Deoxyuridine 5'-triphosphate nucleotidohydrolase (148 aa).

Substrate-binding positions include 67-69 (RSG), Asn-80, 84-86 (LID), and Met-94.

The protein belongs to the dUTPase family. Requires Mg(2+) as cofactor.

It catalyses the reaction dUTP + H2O = dUMP + diphosphate + H(+). Its pathway is pyrimidine metabolism; dUMP biosynthesis; dUMP from dCTP (dUTP route): step 2/2. In terms of biological role, this enzyme is involved in nucleotide metabolism: it produces dUMP, the immediate precursor of thymidine nucleotides and it decreases the intracellular concentration of dUTP so that uracil cannot be incorporated into DNA. This chain is Deoxyuridine 5'-triphosphate nucleotidohydrolase, found in Ralstonia pickettii (strain 12J).